Here is a 447-residue protein sequence, read N- to C-terminus: Protein cereblon (447 aa).

Acidic residues-rich tracts occupy residues 1-10 (MADDEGEEDP) and 25-34 (ESEEEDEMEL). The segment at 1–47 (MADDEGEEDPGINNMGNLLQVISSESEEEDEMELEDAKTADSESPNI) is disordered. The Lon N-terminal domain maps to 82 to 322 (IPVLPHVQVM…CELDIMSKCT (241 aa)). The region spanning 321–429 (CTSLCCKHCP…LTRSALQPRI (109 aa)) is the CULT domain. 2 residues coordinate Zn(2+): Cys326 and Cys329. 2 residues coordinate (S)-thalidomide: Trp383 and Trp389. The Zn(2+) site is built by Cys394 and Cys397.

Belongs to the CRBN family. As to quaternary structure, component of a DCX (DDB1-CUL4-X-box) protein ligase complex.

It localises to the cytoplasm. Its subcellular location is the nucleus. The protein operates within protein modification; protein ubiquitination. Substrate recognition component of a DCX (DDB1-CUL4-X-box) E3 protein ligase complex that mediates the ubiquitination and subsequent proteasomal degradation of target proteins, such as MEIS2. Normal degradation of key regulatory proteins is required for normal limb outgrowth and expression of the fibroblast growth factor FGF8. Maintains presynaptic glutamate release and consequently cognitive functions, such as memory and learning, by negatively regulating large-conductance calcium-activated potassium (BK) channels in excitatory neurons. Likely to function by regulating the assembly and neuronal surface expression of BK channels via its interaction with KCNT1. May also be involved in regulating anxiety-like behaviors via a BK channel-independent mechanism. The chain is Protein cereblon (crbn) from Xenopus tropicalis (Western clawed frog).